The primary structure comprises 318 residues: Homoserine kinase (318 aa).

97–107 provides a ligand contact to ATP; that stretch reads PIGSGLGSSAC.

Belongs to the GHMP kinase family. Homoserine kinase subfamily.

The protein localises to the cytoplasm. The enzyme catalyses L-homoserine + ATP = O-phospho-L-homoserine + ADP + H(+). It functions in the pathway amino-acid biosynthesis; L-threonine biosynthesis; L-threonine from L-aspartate: step 4/5. Functionally, catalyzes the ATP-dependent phosphorylation of L-homoserine to L-homoserine phosphate. In Aliivibrio fischeri (strain ATCC 700601 / ES114) (Vibrio fischeri), this protein is Homoserine kinase.